Consider the following 651-residue polypeptide: Zinc metalloproteinase nas-32 (651 aa).

A signal peptide spans 1 to 21 (MRRFFICYIGFLSIFLDFILA). The propeptide occupies 22 to 202 (DKDNNSEEER…EQSSKSRRKK (181 aa)). N-linked (GlcNAc...) asparagine glycans are attached at residues Asn-25, Asn-72, and Asn-251. Residues 203-394 (RQIDNLAQFW…KMLNTHYSCS (192 aa)) form the Peptidase M12A domain. 6 disulfide bridges follow: Cys-245–Cys-393, Cys-264–Cys-283, Cys-395–Cys-412, Cys-415–Cys-426, Cys-434–Cys-467, and Cys-495–Cys-516. A Zn(2+)-binding site is contributed by His-291. Glu-292 is an active-site residue. Residues His-295 and His-301 each contribute to the Zn(2+) site. The region spanning 380-433 (TFLDLKMLNTHYSCSCPTILSCGNGGFTNPANCSVCICPYGFGGALCTERTDYG) is the EGF-like domain. Asn-411 is a glycosylation site (N-linked (GlcNAc...) asparagine). The 121-residue stretch at 434 to 554 (CGSTLTATDT…TTYTWSYRYV (121 aa)) folds into the CUB domain. N-linked (GlcNAc...) asparagine glycosylation is present at Asn-453. Asn-557 is a glycosylation site (N-linked (GlcNAc...) asparagine). Disulfide bonds link Cys-610–Cys-647, Cys-619–Cys-640, and Cys-628–Cys-644. Positions 610–647 (CKDRFPKSQCSTYSTNGMCTQQPPLAAEFSCAETCGFC) constitute a ShKT domain.

The cofactor is Zn(2+). In terms of tissue distribution, expressed in pharyngeal, anal depressor, intestinal and vulva muscles, head neurons and head mesodermal cell.

The protein localises to the secreted. Metalloprotease. The polypeptide is Zinc metalloproteinase nas-32 (nas-32) (Caenorhabditis elegans).